A 281-amino-acid polypeptide reads, in one-letter code: Probable endonuclease 4 (281 aa).

9 residues coordinate Zn(2+): histidine 78, histidine 118, glutamate 149, aspartate 181, histidine 184, histidine 216, aspartate 229, histidine 231, and glutamate 260.

The protein belongs to the AP endonuclease 2 family. Zn(2+) serves as cofactor.

It catalyses the reaction Endonucleolytic cleavage to 5'-phosphooligonucleotide end-products.. Endonuclease IV plays a role in DNA repair. It cleaves phosphodiester bonds at apurinic or apyrimidinic (AP) sites, generating a 3'-hydroxyl group and a 5'-terminal sugar phosphate. This chain is Probable endonuclease 4, found in Thermoplasma acidophilum (strain ATCC 25905 / DSM 1728 / JCM 9062 / NBRC 15155 / AMRC-C165).